The following is a 126-amino-acid chain: Holo-[acyl-carrier-protein] synthase (126 aa).

The Mg(2+) site is built by Asp-9 and Glu-58.

This sequence belongs to the P-Pant transferase superfamily. AcpS family. It depends on Mg(2+) as a cofactor.

It is found in the cytoplasm. The enzyme catalyses apo-[ACP] + CoA = holo-[ACP] + adenosine 3',5'-bisphosphate + H(+). Its function is as follows. Transfers the 4'-phosphopantetheine moiety from coenzyme A to a Ser of acyl-carrier-protein. In Buchnera aphidicola subsp. Cinara cedri (strain Cc), this protein is Holo-[acyl-carrier-protein] synthase.